Reading from the N-terminus, the 4151-residue chain is Mycoketide-CoA synthase (4151 aa).

Residues 2 to 32 (VDQLQHATEALRKALVQVERLKRTNRALLER) are a coiled coil. Positions 34–457 (SEPIAIVGMS…GTNAHVIIEA (424 aa)) constitute a Ketosynthase family 3 (KS3) 1 domain. Module stretches follow at residues 35–2038 (EPIA…RTEL) and 2057–4070 (DPIA…RREL). C203 (acyl-thioester intermediate; for beta-ketoacyl synthase 1 activity) is an active-site residue. Active-site for beta-ketoacyl synthase 1 activity residues include H338 and H379. Residues 559-880 (VFVFPGQGSQ…AASAFVAGVA (322 aa)) form an acyltransferase 1 region. S650 acts as the Acyl-ester intermediate; for acyltransferase 1 activity in catalysis. The segment at 926-1048 (HPLLGAVVDL…GILRPGSVEP (123 aa)) is N-terminal hotdog fold 1. Positions 926-1194 (HPLLGAVVDL…VARPVTERQL (269 aa)) are dehydratase 1. The 270-residue stretch at 926-1195 (HPLLGAVVDL…ARPVTERQLL (270 aa)) folds into the PKS/mFAS DH 1 domain. H958 functions as the Proton acceptor; for dehydratase activity 1 in the catalytic mechanism. The interval 1060–1195 (AVTVDVADGY…ARPVTERQLL (136 aa)) is C-terminal hotdog fold 1. Residue D1120 is the Proton donor; for dehydratase activity 1 of the active site. The interval 1366 to 1671 (GTFENLRLEP…QARHTGKVVM (306 aa)) is enoyl reductase 1. The segment at 1680 to 1858 (GTVLITGGTG…AISLGWGLWD (179 aa)) is beta-ketoacyl reductase 1. The active-site For beta-ketoacyl reductase 1 activity is the Y1828. The 76-residue stretch at 1963-2038 (AVLLGLVRLH…RLASYIRTEL (76 aa)) folds into the Carrier 1 domain. Position 1998 is an O-(pantetheine 4'-phosphoryl)serine (S1998). Residues 2056 to 2480 (EDPIAIVGMA…GTNAHVIIEA (425 aa)) form the Ketosynthase family 3 (KS3) 2 domain. Residue C2226 is the Acyl-thioester intermediate; for beta-ketoacyl synthase 2 activity of the active site. Catalysis depends on for beta-ketoacyl synthase 2 activity residues H2361 and H2402. The interval 2582-2893 (VFVFPGQGSQ…AVAQGFVTGM (312 aa)) is acyltransferase 2. Catalysis depends on S2672, which acts as the Acyl-ester intermediate; for acyltransferase 2 activity. The N-terminal hotdog fold 2 stretch occupies residues 2940–3062 (HALLGAVIDL…GALRAGSAEP (123 aa)). The segment at 2940–3215 (HALLGAVIDL…ARPVTDQQLR (276 aa)) is dehydratase 2. The 276-residue stretch at 2940-3215 (HALLGAVIDL…ARPVTDQQLR (276 aa)) folds into the PKS/mFAS DH 2 domain. The active-site Proton acceptor; for dehydratase activity 2 is the H2972. The segment at 3074 to 3215 (AVPVEVADGY…ARPVTDQQLR (142 aa)) is C-terminal hotdog fold 2. The Proton donor; for dehydratase activity 2 role is filled by D3135. The tract at residues 3395–3701 (GTFENLRLEL…QARHTGKVVM (307 aa)) is enoyl reductase 2. The tract at residues 3710–3888 (GTVLITGGTG…AISLGWGLWD (179 aa)) is beta-ketoacyl reductase 2. Y3858 acts as the For beta-ketoacyl reductase 2 activity in catalysis. The 76-residue stretch at 3995 to 4070 (AVLLDLVRSH…ALAGYMRREL (76 aa)) folds into the Carrier 2 domain. Position 4030 is an O-(pantetheine 4'-phosphoryl)serine (S4030).

As to quaternary structure, forms a large supramolecular assembly mediated through specific interactions between the N- and C-terminus linkers.

It carries out the reaction a medium-chain fatty acyl-CoA + 5 (S)-methylmalonyl-CoA + 5 malonyl-CoA + 22 NADPH + 32 H(+) = a mycoketide-CoA + 10 CO2 + 22 NADP(+) + 10 CoA + 11 H2O. It functions in the pathway lipid metabolism; fatty acid metabolism. Its function is as follows. Involved in the synthesis of beta-D-mannosyl phosphomycoketide (MPM), an antigenic mycobacterial polyketide. Binds a fatty acyl-CoA as a starter unit, and extends it by five rounds of alternative additions of malonyl-CoA and methylmalonyl-CoA extender units. Depending on the starter unit, the enzyme forms mycoketide-CoAs of different lengths. Shows preference for small-/medium-chain starter fatty acyl substrates. Uses a hybrid modularly iterative mechanism, by forming a supramolecular assembly to perform repetitive cycles of iterations. The chain is Mycoketide-CoA synthase from Mycobacterium tuberculosis (strain ATCC 25618 / H37Rv).